Reading from the N-terminus, the 365-residue chain is Carbohydrate sulfotransferase 10 (365 aa).

Topologically, residues 1-6 (MRRHWL) are cytoplasmic. The chain crosses the membrane as a helical; Signal-anchor for type II membrane protein span at residues 7–27 (LVGACGWVLLILMFVSKFINF). The Lumenal portion of the chain corresponds to 28–356 (SFRIPGDYAG…RYQGDFSLFD (329 aa)). N-linked (GlcNAc...) asparagine glycosylation is found at asparagine 99 and asparagine 104. 3'-phosphoadenylyl sulfate contacts are provided by residues 132 to 138 (PKVGNTQ) and 194 to 202 (RDPFERLIS). N-linked (GlcNAc...) asparagine glycosylation is present at asparagine 325.

It belongs to the sulfotransferase 2 family.

The protein localises to the golgi apparatus membrane. In terms of biological role, catalyzes the transfer of sulfate to position 3 of terminal glucuronic acid of both protein- and lipid-linked oligosaccharides. Participates in biosynthesis of HNK-1 carbohydrate structure, a sulfated glucuronyl-lactosaminyl residue carried by many neural recognition molecules. The chain is Carbohydrate sulfotransferase 10 (chst10) from Danio rerio (Zebrafish).